Here is a 324-residue protein sequence, read N- to C-terminus: Mating-type protein A-3 (324 aa).

The segment at residues 147–215 (TSRPRNQFVL…RHRAENPHLY (69 aa)) is a DNA-binding region (HMG box).

The protein resides in the nucleus. In terms of biological role, required, together with mating-type protein A-2, for efficient ascospore formation. The polypeptide is Mating-type protein A-3 (mtA-3) (Neurospora crassa (strain ATCC 24698 / 74-OR23-1A / CBS 708.71 / DSM 1257 / FGSC 987)).